The following is a 365-amino-acid chain: MGASGILQLPRERFRKTSFFVWVIILFHKVFSIPLGVVHNNTLQVSDIDKFVCRDKLSSTSQLKSVGLNLEGNGVATDVPTATKRWGFRAGVPPKVVNYEAGEWAENCYNLAIKKVDGSECLPEAPEGVRDFPRCRYVHKVSGTGPCPGGLAFHKEGAFFLYDRLASTIIYRGTTFAEGVIAFLILPKARKDFFQSPPLHEPANMTTDPSSYYHTTTINYVVDNFGTNTTEFLFQVDHLTYVQLEARFTPQFLVLLNETIYSDNRRSNTTGKLIWKINPTVDTSMGEWAFWENKKTSQKPFQVKSCLSYLYQKPRTRSLTRQRRSLLPSPPTTTQAKTTKNWFQRIPLQWFRCKTSRERTQCQPQ.

The first 32 residues, 1 to 32, serve as a signal peptide directing secretion; that stretch reads MGASGILQLPRERFRKTSFFVWVIILFHKVFS. An N-linked (GlcNAc...) asparagine; by host glycan is attached at Asn40. Cystine bridges form between Cys108/Cys135 and Cys121/Cys147. Residues Asn204, Asn228, Asn257, and Asn268 are each glycosylated (N-linked (GlcNAc...) asparagine; by host).

This sequence belongs to the filoviruses glycoprotein family. In terms of assembly, homodimer; disulfide-linked. The homodimers are linked by two disulfide bonds in a parallel orientation. As to quaternary structure, monomer. Post-translationally, this precursor is processed into mature sGP and delta-peptide by host furin or furin-like proteases. The cleavage site corresponds to the furin optimal cleavage sequence [KR]-X-[KR]-R. In terms of processing, N-glycosylated. O-glycosylated.

The protein localises to the secreted. Functionally, seems to possess an anti-inflammatory activity as it can reverse the barrier-decreasing effects of TNF alpha. Might therefore contribute to the lack of inflammatory reaction seen during infection in spite the of extensive necrosis and massive virus production. Does not seem to be involved in activation of primary macrophages. Does not seem to interact specifically with neutrophils. In terms of biological role, viroporin that permeabilizes mammalian cell plasma membranes. It acts by altering permeation of ionic compounds and small molecules. This activity may lead to viral enterotoxic activity. This chain is Pre-small/secreted glycoprotein (GP), found in Epomops franqueti (Franquet's epauletted fruit bat).